The following is an 87-amino-acid chain: Toxin Css39.8 (87 aa).

The first 19 residues, 1–19 (MNSLLMITACFFLIGTVWA), serve as a signal peptide directing secretion. Positions 20 to 85 (KEGYLVNKST…TYPLPNKSCS (66 aa)) constitute an LCN-type CS-alpha/beta domain. Cystine bridges form between Cys31-Cys84, Cys35-Cys60, Cys44-Cys65, and Cys48-Cys67.

Belongs to the long (4 C-C) scorpion toxin superfamily. Sodium channel inhibitor family. Beta subfamily. Expressed by the venom gland.

The protein resides in the secreted. Functionally, beta toxins bind voltage-independently at site-4 of sodium channels (Nav) and shift the voltage of activation toward more negative potentials thereby affecting sodium channel activation and promoting spontaneous and repetitive firing. This toxin is lethal to crustaceans (freshwater crayfish (Cambarellus montezumae spp.)), it provokes a reversible paralysis to insects (crickets (Achaeta spp.)), but is not toxic to mice. At high concentrations, it does displace the (beta) mammal-specific toxin Cn2 from rat brain synaptosomes. In Centruroides suffusus (Durango bark scorpion), this protein is Toxin Css39.8.